A 483-amino-acid polypeptide reads, in one-letter code: Phloretin 2'-O-glucosyltransferase (483 aa).

The Proton acceptor role is filled by histidine 15. Residue histidine 15 coordinates an anthocyanidin. The Charge relay role is filled by aspartate 118. Threonine 140, alanine 360, glutamine 362, histidine 377, tryptophan 380, asparagine 381, serine 382, and glutamate 385 together coordinate UDP-alpha-D-glucose. Alanine 400 serves as a coordination point for an anthocyanidin. Residues glutamate 401 and glutamine 402 each contribute to the UDP-alpha-D-glucose site.

The protein belongs to the UDP-glycosyltransferase family.

The enzyme catalyses phloretin + UDP-alpha-D-glucose = phlorizin + UDP + H(+). Its function is as follows. Glycosyltransferase that possesses phloretin 2'-O-glycosyltransferase activity. Converts phloretin to phlorizin (phloretin 2'-O-glucoside), a potent antioxidant. Is specific for phloretin and does not possess glycosyltransferase activity toward naringenin, naringenin chalcone, eriodictyol, eriodictyol chalcone, apigenin, luteolin, kaempferol, quercetin, isoliquiritigenin, butein, caffeic acid, 2-coumaric acid, 3-coumaric acid, 3-hydroxybenzoic acid, 3,4-dihydroxybenzoic acid and 3,4-dihydroxyhydrocinnamic acid. Can glycosylate phloretin in the presence of UDP-glucose, UDP-xylose and UDP-galactose. This Pyrus communis (Pear) protein is Phloretin 2'-O-glucosyltransferase.